A 221-amino-acid chain; its full sequence is Probable endo-1,4-beta-xylanase B (221 aa).

Positions 1–19 (MVSFSSLALALSTVVGVLA) are cleaved as a signal peptide. The GH11 domain maps to 33–221 (QLTHSQTGTK…SSGSATMTVS (189 aa)). Residue E117 is the Nucleophile of the active site. The active-site Proton donor is E208.

This sequence belongs to the glycosyl hydrolase 11 (cellulase G) family.

The protein resides in the secreted. The catalysed reaction is Endohydrolysis of (1-&gt;4)-beta-D-xylosidic linkages in xylans.. The protein operates within glycan degradation; xylan degradation. In terms of biological role, endo-1,4-beta-xylanase involved in the hydrolysis of xylan, a major structural heterogeneous polysaccharide found in plant biomass representing the second most abundant polysaccharide in the biosphere, after cellulose. In Aspergillus clavatus (strain ATCC 1007 / CBS 513.65 / DSM 816 / NCTC 3887 / NRRL 1 / QM 1276 / 107), this protein is Probable endo-1,4-beta-xylanase B (xlnB).